The chain runs to 416 residues: Neamine transaminase NeoN (416 aa).

N6-(pyridoxal phosphate)lysine is present on lysine 231.

The protein belongs to the class-III pyridoxal-phosphate-dependent aminotransferase family. Requires pyridoxal 5'-phosphate as cofactor.

The catalysed reaction is neomycin C + 2-oxoglutarate = 6'''-deamino-6'''-oxoneomycin C + L-glutamate. It catalyses the reaction neamine + 2-oxoglutarate = 6'-oxoparomamine + L-glutamate. Its pathway is antibiotic biosynthesis; neomycin biosynthesis. 6'-oxoglucosaminyl:L-glutamate aminotransferase that catalyzes pyridoxal-5'-phosphate-mediated transamination for the conversion of paromamine to neamine in the biosynthetic pathway of neomycin. Also able to catalyze deamination at C-6''' of neomycin. The sequence is that of Neamine transaminase NeoN (neoN) from Streptomyces fradiae (Streptomyces roseoflavus).